The following is a 145-amino-acid chain: 3-hydroxyacyl-[acyl-carrier-protein] dehydratase FabZ (145 aa).

Histidine 48 is an active-site residue.

This sequence belongs to the thioester dehydratase family. FabZ subfamily.

The protein localises to the cytoplasm. The enzyme catalyses a (3R)-hydroxyacyl-[ACP] = a (2E)-enoyl-[ACP] + H2O. Functionally, involved in unsaturated fatty acids biosynthesis. Catalyzes the dehydration of short chain beta-hydroxyacyl-ACPs and long chain saturated and unsaturated beta-hydroxyacyl-ACPs. This Campylobacter hominis (strain ATCC BAA-381 / DSM 21671 / CCUG 45161 / LMG 19568 / NCTC 13146 / CH001A) protein is 3-hydroxyacyl-[acyl-carrier-protein] dehydratase FabZ.